Reading from the N-terminus, the 208-residue chain is Small ribosomal subunit protein uS5 (208 aa).

Residues 1-15 (MTDSNNQSPNKKTSG) show a composition bias toward polar residues. Residues 1–54 (MTDSNNQSPNKKTSGSSSAPPAADGRQENRRSRGEKRGGRRDRRGQERDSEWQE) are disordered. Basic and acidic residues-rich tracts occupy residues 25–37 (GRQE…GEKR) and 44–54 (RGQERDSEWQE). In terms of domain architecture, S5 DRBM spans 52–115 (WQERVVQIRR…ADGKKHLVRV (64 aa)).

The protein belongs to the universal ribosomal protein uS5 family. Part of the 30S ribosomal subunit. Contacts proteins S4 and S8.

Its function is as follows. With S4 and S12 plays an important role in translational accuracy. Located at the back of the 30S subunit body where it stabilizes the conformation of the head with respect to the body. This Prochlorococcus marinus (strain NATL2A) protein is Small ribosomal subunit protein uS5.